Here is a 501-residue protein sequence, read N- to C-terminus: Glutamyl-tRNA(Gln) amidotransferase subunit A (501 aa).

Active-site charge relay system residues include K80 and S155. S179 serves as the catalytic Acyl-ester intermediate.

Belongs to the amidase family. GatA subfamily. Heterotrimer of A, B and C subunits.

It carries out the reaction L-glutamyl-tRNA(Gln) + L-glutamine + ATP + H2O = L-glutaminyl-tRNA(Gln) + L-glutamate + ADP + phosphate + H(+). In terms of biological role, allows the formation of correctly charged Gln-tRNA(Gln) through the transamidation of misacylated Glu-tRNA(Gln) in organisms which lack glutaminyl-tRNA synthetase. The reaction takes place in the presence of glutamine and ATP through an activated gamma-phospho-Glu-tRNA(Gln). The protein is Glutamyl-tRNA(Gln) amidotransferase subunit A of Cupriavidus pinatubonensis (strain JMP 134 / LMG 1197) (Cupriavidus necator (strain JMP 134)).